The chain runs to 122 residues: Small ribosomal subunit protein uS13 (122 aa).

A disordered region spans residues 98-122 (VRGQRTKTNARTRKGKRKTVGAKAK).

This sequence belongs to the universal ribosomal protein uS13 family. Part of the 30S ribosomal subunit. Forms a loose heterodimer with protein S19. Forms two bridges to the 50S subunit in the 70S ribosome.

Functionally, located at the top of the head of the 30S subunit, it contacts several helices of the 16S rRNA. In the 70S ribosome it contacts the 23S rRNA (bridge B1a) and protein L5 of the 50S subunit (bridge B1b), connecting the 2 subunits; these bridges are implicated in subunit movement. Contacts the tRNAs in the A and P-sites. This Nautilia profundicola (strain ATCC BAA-1463 / DSM 18972 / AmH) protein is Small ribosomal subunit protein uS13.